Reading from the N-terminus, the 166-residue chain is Crossover junction endodeoxyribonuclease RuvC (166 aa).

Catalysis depends on residues Asp7, Glu67, and Asp140. Positions 7, 67, and 140 each coordinate Mg(2+).

The protein belongs to the RuvC family. Homodimer which binds Holliday junction (HJ) DNA. The HJ becomes 2-fold symmetrical on binding to RuvC with unstacked arms; it has a different conformation from HJ DNA in complex with RuvA. In the full resolvosome a probable DNA-RuvA(4)-RuvB(12)-RuvC(2) complex forms which resolves the HJ. Requires Mg(2+) as cofactor.

It is found in the cytoplasm. It catalyses the reaction Endonucleolytic cleavage at a junction such as a reciprocal single-stranded crossover between two homologous DNA duplexes (Holliday junction).. Functionally, the RuvA-RuvB-RuvC complex processes Holliday junction (HJ) DNA during genetic recombination and DNA repair. Endonuclease that resolves HJ intermediates. Cleaves cruciform DNA by making single-stranded nicks across the HJ at symmetrical positions within the homologous arms, yielding a 5'-phosphate and a 3'-hydroxyl group; requires a central core of homology in the junction. The consensus cleavage sequence is 5'-(A/T)TT(C/G)-3'. Cleavage occurs on the 3'-side of the TT dinucleotide at the point of strand exchange. HJ branch migration catalyzed by RuvA-RuvB allows RuvC to scan DNA until it finds its consensus sequence, where it cleaves and resolves the cruciform DNA. This chain is Crossover junction endodeoxyribonuclease RuvC, found in Brevibacillus brevis (strain 47 / JCM 6285 / NBRC 100599).